Reading from the N-terminus, the 258-residue chain is Acetylglutamate kinase (258 aa).

Substrate is bound by residues glycine 41–glycine 42, arginine 63, and asparagine 156.

Belongs to the acetylglutamate kinase family. ArgB subfamily. As to quaternary structure, homodimer.

The protein resides in the cytoplasm. It catalyses the reaction N-acetyl-L-glutamate + ATP = N-acetyl-L-glutamyl 5-phosphate + ADP. Its pathway is amino-acid biosynthesis; L-arginine biosynthesis; N(2)-acetyl-L-ornithine from L-glutamate: step 2/4. Functionally, catalyzes the ATP-dependent phosphorylation of N-acetyl-L-glutamate. The protein is Acetylglutamate kinase of Geobacillus stearothermophilus (Bacillus stearothermophilus).